A 1033-amino-acid polypeptide reads, in one-letter code: TBC domain-containing protein kinase-like protein (1033 aa).

Disordered stretches follow at residues 1-21, 35-55, and 81-101; these read MMKSDEGVSGNSNNNNNYKFK, YDNNNNNNNNNNNNDDNNTVT, and GSIGGSSSSSSTSNSVSTPKP. 2 stretches are compositionally biased toward low complexity: residues 36–52 and 81–97; these read DNNNNNNNNNNNNDDNN and GSIGGSSSSSSTSNSVS. A Protein kinase domain is found at 72 to 425; that stretch reads NKLTINQNNG…SETLLDHPYF (354 aa). ATP-binding positions include 78 to 86 and lysine 113; that span reads QNNGSIGGS. Residues 535–546 are compositionally biased toward polar residues; that stretch reads STNSGLNSPQPY. Residues 535-560 are disordered; the sequence is STNSGLNSPQPYQHQHHQHQHQHQHP. Residues 548–558 are compositionally biased toward basic residues; that stretch reads HQHHQHQHQHQ. Positions 657–844 constitute a Rab-GAP TBC domain; that stretch reads FVPPILRGDI…ILWDSILLCP (188 aa).

The protein belongs to the protein kinase superfamily. Ser/Thr protein kinase family.

The sequence is that of TBC domain-containing protein kinase-like protein (tbck) from Dictyostelium discoideum (Social amoeba).